The sequence spans 565 residues: NAD-dependent malic enzyme (565 aa).

The active-site Proton donor is Tyr-104. Arg-157 lines the NAD(+) pocket. Lys-175 acts as the Proton acceptor in catalysis. Glu-246, Asp-247, and Asp-270 together coordinate a divalent metal cation. 2 residues coordinate NAD(+): Asp-270 and Asn-418.

Belongs to the malic enzymes family. In terms of assembly, homotetramer. Mg(2+) serves as cofactor. It depends on Mn(2+) as a cofactor.

The catalysed reaction is (S)-malate + NAD(+) = pyruvate + CO2 + NADH. It carries out the reaction oxaloacetate + H(+) = pyruvate + CO2. This chain is NAD-dependent malic enzyme, found in Klebsiella pneumoniae (strain 342).